A 131-amino-acid polypeptide reads, in one-letter code: Translation initiation factor 5A (131 aa).

Position 36 is a hypusine (lysine 36).

The protein belongs to the eIF-5A family.

It is found in the cytoplasm. Its function is as follows. Functions by promoting the formation of the first peptide bond. The chain is Translation initiation factor 5A (eIF5A) from Metallosphaera sedula (strain ATCC 51363 / DSM 5348 / JCM 9185 / NBRC 15509 / TH2).